The sequence spans 216 residues: Lipoprotein-releasing system ATP-binding protein LolD (216 aa).

The ABC transporter domain maps to 2-216 (IHLEGITKSF…TIHMVDGNII (215 aa)). 34 to 41 (GPSGAGKT) provides a ligand contact to ATP.

Belongs to the ABC transporter superfamily. Lipoprotein translocase (TC 3.A.1.125) family. As to quaternary structure, the complex is composed of two ATP-binding proteins (LolD) and two transmembrane proteins (LolC and LolE).

It localises to the cell inner membrane. In terms of biological role, part of the ABC transporter complex LolCDE involved in the translocation of mature outer membrane-directed lipoproteins, from the inner membrane to the periplasmic chaperone, LolA. Responsible for the formation of the LolA-lipoprotein complex in an ATP-dependent manner. The chain is Lipoprotein-releasing system ATP-binding protein LolD from Bacteroides fragilis (strain YCH46).